Reading from the N-terminus, the 260-residue chain is Indole-3-glycerol phosphate synthase (260 aa).

This sequence belongs to the TrpC family.

It carries out the reaction 1-(2-carboxyphenylamino)-1-deoxy-D-ribulose 5-phosphate + H(+) = (1S,2R)-1-C-(indol-3-yl)glycerol 3-phosphate + CO2 + H2O. It functions in the pathway amino-acid biosynthesis; L-tryptophan biosynthesis; L-tryptophan from chorismate: step 4/5. The chain is Indole-3-glycerol phosphate synthase from Desulfotalea psychrophila (strain LSv54 / DSM 12343).